Consider the following 584-residue polypeptide: MMMFNEMGMYGNMDFFSSSTSLDVCPLPQAEQEPVVEDVDYTDDEMDVDELEKRMWRDKMRLKRLKEQQSKCKEGVDGSKQRQSQEQARRKKMSRAQDGILKYMLKMMEVCKAQGFVYGIIPEKGKPVTGASDNLREWWKDKVRFDRNGPAAIAKYQSENNISGGSNDCNSLVGPTPHTLQELQDTTLGSLLSALMQHCDPPQRRFPLEKGVSPPWWPNGNEEWWPQLGLPNEQGPPPYKKPHDLKKAWKVGVLTAVIKHMSPDIAKIRKLVRQSKCLQDKMTAKESATWLAIINQEEVVARELYPESCPPLSSSSSLGSGSLLINDCSEYDVEGFEKEQHGFDVEERKPEIVMMHPLASFGVAKMQHFPIKEEVATTVNLEFTRKRKQNNDMNVMVMDRSAGYTCENGQCPHSKMNLGFQDRSSRDNHQMVCPYRDNRLAYGASKFHMGGMKLVVPQQPVQPIDLSGVGVPENGQKMITELMAMYDRNVQSNQTPPTLMENQSMVIDAKAAQNQQLNFNSGNQMFMQQGTNNGVNNRFQMVFDSTPFDMAAFDYRDDWQTGAMEGMGKQQQQQQQQQDVSIWF.

A coiled-coil region spans residues 41–74; the sequence is YTDDEMDVDELEKRMWRDKMRLKRLKEQQSKCKE. Residues 67 to 80 are compositionally biased toward basic and acidic residues; it reads EQQSKCKEGVDGSK. Disordered stretches follow at residues 67–93 and 565–584; these read EQQS…RKKM and EGMG…SIWF.

The protein belongs to the EIN3 family. As to quaternary structure, acts as a homodimer to bind the primary ethylene response element.

It localises to the nucleus. Its function is as follows. Probable transcription factor acting as a positive regulator in the ethylene response pathway. Could bind the primary ethylene response element present in the ETHYLENE-RESPONSE-FACTOR1 promoter. The sequence is that of ETHYLENE INSENSITIVE 3-like 1 protein (EIL1) from Arabidopsis thaliana (Mouse-ear cress).